A 783-amino-acid chain; its full sequence is B-cell scaffold protein with ankyrin repeats (783 aa).

The interaction with ITPR2 stretch occupies residues 1–154 (MLPVASGTRG…GYISVIRQIL (154 aa)). In terms of domain architecture, TIR spans 25–153 (NAKDILLLYE…DGYISVIRQI (129 aa)). Positions 199–326 (VLPGEIPCEK…EIPYYEFKHL (128 aa)) constitute a DBB domain. 2 ANK repeats span residues 341-370 (ELPTLLHCAAKFGLKNLALHLLQCSGATRA) and 377-407 (DGSDLLHIAERHGHEELKEVFEDFLSQNTGR). Disordered regions lie at residues 422 to 521 (FSTY…AASQ), 538 to 586 (MERS…EDNE), 604 to 624 (SFIINRPPAPTPRPTHIPPKE), and 641 to 670 (RQSDGDKFYSLPKKPDKTRMEGPTFPSTRD). Positions 444-479 (RNTDRSEEPERSVEMKEEEAGAEARRSLSEGERESS) are enriched in basic and acidic residues. Positions 505-515 (HCRPPLLPPRP) are enriched in pro residues. Over residues 549–565 (ARPETREESSREEKKEE) the composition is skewed to basic and acidic residues. The span at 566-586 (AQEEEEEEENPYAFAETEDNE) shows a compositional bias: acidic residues. Residues 610-620 (PPAPTPRPTHI) are compositionally biased toward pro residues. Positions 641 to 660 (RQSDGDKFYSLPKKPDKTRM) are enriched in basic and acidic residues. Residue Tyr-649 is modified to Phosphotyrosine.

As to quaternary structure, interacts with LYN, ITPR1 and ITPR2. Phosphorylated on tyrosines upon BCR activation. Specifically expressed in spleen. Highly expressed in immature B-cells and recirculating B-cells, and at low levels in pro-B and pre-B cells.

Involved in B-cell receptor (BCR)-induced Ca(2+) mobilization from intracellular stores. Promotes Lyn-mediated phosphorylation of IP3 receptors 1 and 2. This Mus musculus (Mouse) protein is B-cell scaffold protein with ankyrin repeats (Bank1).